The chain runs to 103 residues: Histone H4 (103 aa).

Over residues 1–14 (MTGRGKGGKGLGKG) the composition is skewed to gly residues. Positions 1 to 20 (MTGRGKGGKGLGKGGAKRHR) are disordered. An N-acetylthreonine modification is found at T2. K6 carries the N6-acetyl-N6-methyllysine; alternate modification. 4 positions are modified to N6-acetyllysine: K6, K9, K13, and K17. K13 carries the post-translational modification N6-acetyl-N6-methyllysine; alternate. Residue K21 is modified to N6,N6-dimethyllysine. K32 is modified (N6-methyllysine).

Belongs to the histone H4 family. The nucleosome is a histone octamer containing two molecules each of H2A, H2B, H3 and H4 assembled in one H3-H4 heterotetramer and two H2A-H2B heterodimers. The octamer wraps approximately 147 bp of DNA.

It is found in the nucleus. Its subcellular location is the chromosome. Functionally, core component of nucleosome. Nucleosomes wrap and compact DNA into chromatin, limiting DNA accessibility to the cellular machineries which require DNA as a template. Histones thereby play a central role in transcription regulation, DNA repair, DNA replication and chromosomal stability. DNA accessibility is regulated via a complex set of post-translational modifications of histones, also called histone code, and nucleosome remodeling. A mixture of histones H2B and H4 has antimicrobial activity against the Gram-positive bacterium M.luteus. The protein is Histone H4 of Penaeus vannamei (Whiteleg shrimp).